The following is a 555-amino-acid chain: Urocanate hydratase (555 aa).

Residues 52-53 (GG), glutamine 130, 176-178 (GMG), glutamate 196, arginine 201, 242-243 (NA), 263-267 (QTSAH), 273-274 (YL), and tyrosine 322 contribute to the NAD(+) site. Cysteine 410 is an active-site residue. Residue glycine 492 participates in NAD(+) binding.

Belongs to the urocanase family. NAD(+) is required as a cofactor.

The protein localises to the cytoplasm. The catalysed reaction is 4-imidazolone-5-propanoate = trans-urocanate + H2O. The protein operates within amino-acid degradation; L-histidine degradation into L-glutamate; N-formimidoyl-L-glutamate from L-histidine: step 2/3. Its function is as follows. Catalyzes the conversion of urocanate to 4-imidazolone-5-propionate. This chain is Urocanate hydratase, found in Shewanella baltica (strain OS155 / ATCC BAA-1091).